The primary structure comprises 264 residues: E3 ubiquitin-protein ligase MARCHF8 (264 aa).

The tract at residues 15-47 is disordered; the sequence is LGHSVSRSSNISKAGSPTSVSAPSRFPRTSVTP. A compositionally biased stretch (polar residues) spans 16 to 47; it reads GHSVSRSSNISKAGSPTSVSAPSRFPRTSVTP. An RING-CH-type zinc finger spans residues 45 to 106; sequence VTPSSQDICR…ELCKFEFIME (62 aa). The Zn(2+) site is built by C53, C56, C70, C72, H80, C83, C96, and C99. The next 2 helical transmembrane spans lie at 130 to 150 and 170 to 190; these read CSVT…YVLI and FWTK…FMYV.

It localises to the cytoplasmic vesicle membrane. The protein localises to the lysosome membrane. It is found in the early endosome membrane. It carries out the reaction S-ubiquitinyl-[E2 ubiquitin-conjugating enzyme]-L-cysteine + [acceptor protein]-L-lysine = [E2 ubiquitin-conjugating enzyme]-L-cysteine + N(6)-ubiquitinyl-[acceptor protein]-L-lysine.. Its pathway is protein modification; protein ubiquitination. Functionally, E3 ubiquitin-protein ligase that mediates ubiquitination of cd86 and MHC class II proteins, such as hla-dr alpha and beta, and promotes their subsequent endocytosis and sorting to lysosomes via multivesicular bodies. This chain is E3 ubiquitin-protein ligase MARCHF8 (marchf8), found in Xenopus laevis (African clawed frog).